Consider the following 159-residue polypeptide: Endoribonuclease YbeY (159 aa).

Zn(2+) is bound by residues H125, H129, and H135.

This sequence belongs to the endoribonuclease YbeY family. Requires Zn(2+) as cofactor.

The protein resides in the cytoplasm. In terms of biological role, single strand-specific metallo-endoribonuclease involved in late-stage 70S ribosome quality control and in maturation of the 3' terminus of the 16S rRNA. This Enterococcus faecalis (strain ATCC 700802 / V583) protein is Endoribonuclease YbeY.